We begin with the raw amino-acid sequence, 129 residues long: Small ribosomal subunit protein uS11 (129 aa).

It belongs to the universal ribosomal protein uS11 family. In terms of assembly, part of the 30S ribosomal subunit. Interacts with proteins S7 and S18. Binds to IF-3.

Located on the platform of the 30S subunit, it bridges several disparate RNA helices of the 16S rRNA. Forms part of the Shine-Dalgarno cleft in the 70S ribosome. The sequence is that of Small ribosomal subunit protein uS11 from Hydrogenovibrio crunogenus (strain DSM 25203 / XCL-2) (Thiomicrospira crunogena).